We begin with the raw amino-acid sequence, 332 residues long: Beta-ketoacyl-[acyl-carrier-protein] synthase III (332 aa).

Active-site residues include cysteine 116 and histidine 257. Positions 258–262 (QANQR) are ACP-binding. Asparagine 287 is a catalytic residue.

This sequence belongs to the thiolase-like superfamily. FabH family. As to quaternary structure, homodimer.

Its subcellular location is the cytoplasm. The enzyme catalyses malonyl-[ACP] + acetyl-CoA + H(+) = 3-oxobutanoyl-[ACP] + CO2 + CoA. Its pathway is lipid metabolism; fatty acid biosynthesis. Functionally, catalyzes the condensation reaction of fatty acid synthesis by the addition to an acyl acceptor of two carbons from malonyl-ACP. Catalyzes the first condensation reaction which initiates fatty acid synthesis and may therefore play a role in governing the total rate of fatty acid production. Possesses both acetoacetyl-ACP synthase and acetyl transacylase activities. Its substrate specificity determines the biosynthesis of branched-chain and/or straight-chain of fatty acids. The protein is Beta-ketoacyl-[acyl-carrier-protein] synthase III of Acaryochloris marina (strain MBIC 11017).